The chain runs to 124 residues: Sporulation initiation phosphotransferase F (124 aa).

The 115-residue stretch at 5-119 (KILIVDDQYG…EIRDAVKKYL (115 aa)) folds into the Response regulatory domain. The Mg(2+) site is built by D10, D11, D54, and K56. D54 carries the post-translational modification 4-aspartylphosphate.

It depends on Mg(2+) as a cofactor. Post-translationally, phosphorylated by KinA and KinB. Dephosphorylated by RapA and RapB.

It localises to the cytoplasm. In terms of biological role, key element in the phosphorelay regulating sporulation initiation. Phosphorylation of spo0B during sporulation initiation. In Bacillus subtilis (strain 168), this protein is Sporulation initiation phosphotransferase F (spo0F).